Here is a 602-residue protein sequence, read N- to C-terminus: Elongation factor 4 (602 aa).

Residues 7–189 (KFIRNFSIIA…QLVVAIPPPV (183 aa)) form the tr-type G domain. Residues 19-24 (DHGKST) and 136-139 (NKID) each bind GTP.

The protein belongs to the TRAFAC class translation factor GTPase superfamily. Classic translation factor GTPase family. LepA subfamily.

The protein resides in the cell inner membrane. The catalysed reaction is GTP + H2O = GDP + phosphate + H(+). Functionally, required for accurate and efficient protein synthesis under certain stress conditions. May act as a fidelity factor of the translation reaction, by catalyzing a one-codon backward translocation of tRNAs on improperly translocated ribosomes. Back-translocation proceeds from a post-translocation (POST) complex to a pre-translocation (PRE) complex, thus giving elongation factor G a second chance to translocate the tRNAs correctly. Binds to ribosomes in a GTP-dependent manner. The chain is Elongation factor 4 from Coxiella burnetii (strain RSA 493 / Nine Mile phase I).